The sequence spans 444 residues: Probable galactarate/D-glucarate transporter GarP (444 aa).

Topologically, residues 1-11 are cytoplasmic; it reads MILDTVDEKKK. The chain crosses the membrane as a helical span at residues 12–32; the sequence is GVHTRYLILLIIFIVTAVNYA. Topologically, residues 33 to 56 are periplasmic; it reads DRATLSIAGTEVAKELQLSAVSMG. Residues 57 to 77 traverse the membrane as a helical segment; the sequence is YIFSAFGWAYLLMQIPGGWLL. The Cytoplasmic portion of the chain corresponds to 78-89; the sequence is DKFGSKKVYTYS. A run of 2 helical transmembrane segments spans residues 90 to 110 and 111 to 131; these read LFFWSLFTFLQGFVDMFPLAW and AGISMFFMRFMLGFSEAPSFP. The Cytoplasmic segment spans residues 132 to 157; sequence ANARIVAAWFPTKERGTASAIFNSAQ. The next 2 helical transmembrane spans lie at 158–178 and 179–199; these read YFSLALFSPLLGWLTFAWGWE and HVFTVMGVIGFVLTALWIKLI. Over 200-252 the chain is Cytoplasmic; the sequence is HNPTDHPRMSAEELKFISENGAVVDMDHKKPGSAAASGPKLHYIKQLLSNRMM. Residues 253-273 traverse the membrane as a helical segment; the sequence is LGVFFGQYFINTITWFFLTWF. Residues 274-288 are Periplasmic-facing; the sequence is PIYLVQEKGMSILKV. Residues 289 to 309 form a helical membrane-spanning segment; it reads GLVASIPALCGFAGGVLGGVF. The Cytoplasmic portion of the chain corresponds to 310-319; that stretch reads SDYLIKRGLS. Residues 320-340 traverse the membrane as a helical segment; it reads LTLARKLPIVLGMLLASTIIL. The Periplasmic segment spans residues 341–350; that stretch reads CNYTNNTTLV. Residues 351 to 371 form a helical membrane-spanning segment; that stretch reads VMLMALAFFGKGFGALGWPVI. At 372–385 the chain is on the cytoplasmic side; sequence SDTAPKEIVGLCGG. A helical transmembrane segment spans residues 386–406; the sequence is VFNVFGNVASIVTPLVIGYLV. The Periplasmic portion of the chain corresponds to 407–413; it reads SELHSFN. Residues 414-434 traverse the membrane as a helical segment; that stretch reads AALVFVGCSALMAMVCYLFVV. Over 435–444 the chain is Cytoplasmic; that stretch reads GDIKRMELQK.

Belongs to the major facilitator superfamily. Phthalate permease family.

It is found in the cell inner membrane. It carries out the reaction galactarate(in) + H(+)(in) = galactarate(out) + H(+)(out). The enzyme catalyses D-glucarate(in) + H(+)(in) = D-glucarate(out) + H(+)(out). It catalyses the reaction (R)-glycerate(in) + H(+)(in) = (R)-glycerate(out) + H(+)(out). Probably involved in the uptake of galactarate and/or D-glucarate. May also transport D-glycerate. This chain is Probable galactarate/D-glucarate transporter GarP, found in Escherichia coli (strain K12).